The following is a 699-amino-acid chain: Kinesin-like protein KIF3A (699 aa).

The Kinesin motor domain occupies N14–I345. G100–T107 lines the ATP pocket. Residues P355–L590 adopt a coiled-coil conformation. Disordered regions lie at residues K372–E421 and S663–Q699. Positions E376–E400 are enriched in acidic residues. A compositionally biased stretch (basic residues) spans T672–S687. Residue S687 is modified to Phosphoserine. Positions L697–Q699 are globular.

It belongs to the TRAFAC class myosin-kinesin ATPase superfamily. Kinesin family. Kinesin II subfamily. In terms of assembly, heterodimer of KIF3A and KIF3B. Interacts with CIMAP3. Interacts with CLN3. Interacts with DCTN1. Interacts with FLCN. Interacts with AP3B1.

The protein resides in the cytoplasm. Its subcellular location is the cytoskeleton. It localises to the cell projection. It is found in the cilium. The protein localises to the microtubule organizing center. The protein resides in the centrosome. Its subcellular location is the centriole. Its function is as follows. Microtubule-based anterograde translocator for membranous organelles. Plus end-directed microtubule sliding activity in vitro. Plays a role in primary cilia formation. Plays a role in centriole cohesion and subdistal appendage organization and function. Regulates the formation of the subdistal appendage via recruitment of DCTN1 to the centriole. Also required for ciliary basal feet formation and microtubule anchoring to mother centriole. This is Kinesin-like protein KIF3A (KIF3A) from Homo sapiens (Human).